The primary structure comprises 132 residues: MTEASESCVRDPSNYRDRSADWYAFYDERRRKEIIDIIDEHPEIVEEHAANPFGYRKHPSPYLQRVHNYFRMQPTFGKYYIYSEREWDAYRIATIREFGELPELGDERFKTEEEAMHAVFLRRIEDVRAELA.

Heterotetramer of two DmfA1 (alpha) and two DmfA2 (beta) subunits.

It catalyses the reaction N,N-dimethylformamide + H2O = dimethylamine + formate. Activity is slightly inhibited by Mg(2+) and Mn(2+), and slightly increased by Cu(2+). Activity is slightly inhibited by the chelating agents 8-hydroxyquinoline, ethylenediaminetetraacetate, o-phenanthroline and 2,2'-bipyridyl. Functionally, hydrolyzes N,N-dimethylformamide, and to a lesser extent N,N-dimethylacetamide and N,N-diethylacetamide. Has no activity against the substituted amides N-methylformamide, N-ethylformamide, N-ethylformamide and N-methylacetamide or the unsubstituted amides formamide, nicotinamide, acetoamide, benzamide, acetamide and acrylamide. The protein is N,N-dimethylformamidase alpha subunit of Alcaligenes sp.